Reading from the N-terminus, the 186-residue chain is dCTP deaminase (186 aa).

107 to 112 (KSTYAR) provides a ligand contact to dCTP. The Proton donor/acceptor role is filled by E133. 3 residues coordinate dCTP: Q152, Y166, and Q176.

This sequence belongs to the dCTP deaminase family. As to quaternary structure, homotrimer.

The catalysed reaction is dCTP + H2O + H(+) = dUTP + NH4(+). It participates in pyrimidine metabolism; dUMP biosynthesis; dUMP from dCTP (dUTP route): step 1/2. Catalyzes the deamination of dCTP to dUTP. This is dCTP deaminase from Campylobacter lari (strain RM2100 / D67 / ATCC BAA-1060).